The chain runs to 95 residues: Small ribosomal subunit protein bS6 (95 aa).

Belongs to the bacterial ribosomal protein bS6 family.

Functionally, binds together with bS18 to 16S ribosomal RNA. The polypeptide is Small ribosomal subunit protein bS6 (Clostridium perfringens (strain ATCC 13124 / DSM 756 / JCM 1290 / NCIMB 6125 / NCTC 8237 / Type A)).